We begin with the raw amino-acid sequence, 83 residues long: Sec-independent protein translocase protein TatA (83 aa).

Residues 1-21 (MGSLSPWHWAILAVVVIVLFG) traverse the membrane as a helical segment. Residues 48-83 (NENKAEASIETPTPVQSQRVDPSAASGQDSTEARPA) are disordered. Residues 57 to 77 (ETPTPVQSQRVDPSAASGQDS) show a composition bias toward polar residues.

It belongs to the TatA/E family. As to quaternary structure, the Tat system comprises two distinct complexes: a TatABC complex, containing multiple copies of TatA, TatB and TatC subunits, and a separate TatA complex, containing only TatA subunits. Substrates initially bind to the TatABC complex, which probably triggers association of the separate TatA complex to form the active translocon.

The protein localises to the cell membrane. Part of the twin-arginine translocation (Tat) system that transports large folded proteins containing a characteristic twin-arginine motif in their signal peptide across membranes. TatA could form the protein-conducting channel of the Tat system. This chain is Sec-independent protein translocase protein TatA, found in Mycobacterium bovis (strain BCG / Pasteur 1173P2).